A 110-amino-acid polypeptide reads, in one-letter code: U32-theraphotoxin-Cg1a (110 aa).

An N-terminal signal peptide occupies residues 1–19; sequence MNHCFLILFTLIVFTVVWS. The propeptide occupies 20–43; the sequence is LEENEEYPDEDEMIESFMDGYSYR. 4 cysteine pairs are disulfide-bonded: C49/C63, C56/C69, C60/C105, and C62/C80.

Belongs to the neurotoxin 03 (Tx2) family. 02 subfamily. Expressed by the venom gland.

It is found in the secreted. Functionally, probable ion channel inhibitor. The polypeptide is U32-theraphotoxin-Cg1a (Chilobrachys guangxiensis (Chinese earth tiger tarantula)).